The primary structure comprises 209 residues: uncharacterized protein (209 aa).

Positions M1 to A19 are cleaved as a signal peptide. N-linked (GlcNAc...) asparagine glycosylation is found at N41 and N109.

In terms of tissue distribution, component of the acid-soluble organic matrix of prismatic shell layers (at protein level).

It localises to the secreted. This is an uncharacterized protein from Haliotis asinina (Donkey's ear abalone).